A 381-amino-acid chain; its full sequence is cAMP-dependent protein kinase type I-beta regulatory subunit (381 aa).

Residues 1 to 136 (MASPSCFHSE…ALAKAISKNV (136 aa)) form a dimerization and phosphorylation region. Residue Ser-3 is modified to Phosphoserine. Tyr-21 is modified (3'-nitrotyrosine). The tract at residues 66 to 88 (LARQKSNSQCDSHDEEISPTPPN) is disordered. Phosphoserine occurs at positions 77 and 83. At Thr-85 the chain carries Phosphothreonine. The short motif at 96-100 (RRGGV) is the Pseudophosphorylation motif element. Arg-97 carries the omega-N-methylarginine modification. 3',5'-cyclic AMP contacts are provided by residues 137-254 (LFSH…SKVS), Glu-202, Arg-211, 255-381 (ILES…SLTV), Glu-326, and Arg-335.

The protein belongs to the cAMP-dependent kinase regulatory chain family. In terms of assembly, the inactive holoenzyme is composed of two regulatory chains and two catalytic chains. Activation by cAMP releases the two active catalytic monomers and the regulatory dimer. Interacts with PRKX; regulates this cAMP-dependent protein kinase. Interacts with smAKAP; this interaction may target PRKAR1B to the plasma membrane. In terms of processing, the pseudophosphorylation site binds to the substrate-binding region of the catalytic chain, resulting in the inhibition of its activity. In terms of tissue distribution, four types of regulatory chains are found: I-alpha, I-beta, II-alpha, and II-beta. Their expression varies among tissues and is in some cases constitutive and in others inducible.

Its subcellular location is the cell membrane. In terms of biological role, regulatory subunit of the cAMP-dependent protein kinases involved in cAMP signaling in cells. The chain is cAMP-dependent protein kinase type I-beta regulatory subunit (Prkar1b) from Mus musculus (Mouse).